We begin with the raw amino-acid sequence, 146 residues long: Large ribosomal subunit protein uL11 (146 aa).

This sequence belongs to the universal ribosomal protein uL11 family. In terms of assembly, part of the ribosomal stalk of the 50S ribosomal subunit. Interacts with L10 and the large rRNA to form the base of the stalk. L10 forms an elongated spine to which L12 dimers bind in a sequential fashion forming a multimeric L10(L12)X complex. One or more lysine residues are methylated.

In terms of biological role, forms part of the ribosomal stalk which helps the ribosome interact with GTP-bound translation factors. This chain is Large ribosomal subunit protein uL11, found in Blochmanniella floridana.